Consider the following 742-residue polypeptide: Collectin-12 (742 aa).

Residues 1 to 37 (MKDDFAEEEEVQSFGYKRFGIQEGTQCTKCKNNWALK) are Cytoplasmic-facing. The chain crosses the membrane as a helical; Signal-anchor for type II membrane protein span at residues 38-58 (FSIILLYVLCALLTITVAILG). Residues 59–742 (YKVVEKMDTV…EREAVPSSIL (684 aa)) are Extracellular-facing. The stretch at 104–142 (TNSELSTFRSDILDLRQQLQEITEKTSKNKDMLEKLQAN) forms a coiled coil. 3 N-linked (GlcNAc...) asparagine glycosylation sites follow: asparagine 159, asparagine 168, and asparagine 271. A coiled-coil region spans residues 220–301 (ITNLQRSVDD…SFTGQMDNIT (82 aa)). The tract at residues 439 to 608 (TILQGPPGPR…TPASEVNGCP (170 aa)) is disordered. 2 consecutive Collagen-like domains span residues 452–511 (GDRG…KGSR) and 527–586 (GPPG…PGPS). Residues 501–514 (SKGSQGPKGSRGSP) are compositionally biased toward low complexity. Residues 516-532 (KPGPQGPSGDPGPPGPP) show a composition bias toward pro residues. Residues 534 to 556 (KDGLPGPQGPPGFQGLQGTVGEP) show a composition bias toward low complexity. The span at 571 to 585 (PGMPGPKGPPGPPGP) shows a compositional bias: pro residues. 3 cysteine pairs are disulfide-bonded: cysteine 607–cysteine 618, cysteine 635–cysteine 730, and cysteine 708–cysteine 722. Residues 614–731 (FTDKCYYFSV…CDEINNFICE (118 aa)) form the C-type lectin domain. Residues phenylalanine 644, asparagine 646, glutamate 650, aspartate 670, and glutamate 674 each contribute to the Ca(2+) site. Residues lysine 691, glutamine 694, and aspartate 696 each coordinate a carbohydrate. Glutamine 694, aspartate 696, asparagine 697, glutamate 706, aspartate 707, asparagine 718, aspartate 719, and glutamate 731 together coordinate Ca(2+). A carbohydrate is bound at residue glutamate 706. A carbohydrate-binding residues include asparagine 718 and aspartate 719.

As to quaternary structure, the extracellular domain forms a stable trimer. The extracellular domain interacts with fibrillar amyloid-beta peptide. In terms of tissue distribution, highly expressed in lung, spleen, small and large intestine, stomach and brain. Expressed in neonatal microglia.

Its subcellular location is the membrane. Scavenger receptor that displays several functions associated with host defense. Promotes binding and phagocytosis of Gram-positive, Gram-negative bacteria and yeast. Mediates the recognition, internalization and degradation of oxidatively modified low density lipoprotein (oxLDL) by vascular endothelial cells. Binds to several carbohydrates including Gal-type ligands, D-galactose, L- and D-fucose, GalNAc, T and Tn antigens in a calcium-dependent manner and internalizes specifically GalNAc in nurse-like cells. Also binds to sialyl Lewis X or a trisaccharide and asialo-orosomucoid (ASOR). This Rattus norvegicus (Rat) protein is Collectin-12 (Colec12).